The chain runs to 180 residues: Large ribosomal subunit protein uL6 (180 aa).

It belongs to the universal ribosomal protein uL6 family. In terms of assembly, part of the 50S ribosomal subunit.

This protein binds to the 23S rRNA, and is important in its secondary structure. It is located near the subunit interface in the base of the L7/L12 stalk, and near the tRNA binding site of the peptidyltransferase center. The protein is Large ribosomal subunit protein uL6 of Borrelia garinii subsp. bavariensis (strain ATCC BAA-2496 / DSM 23469 / PBi) (Borreliella bavariensis).